Consider the following 94-residue polypeptide: HssA/B-like protein 49 (94 aa).

The segment at 1–20 is disordered; the sequence is MTLFSSISSISNPMTSSKSS.

The protein belongs to the hssA/B family.

The chain is HssA/B-like protein 49 (hssl49) from Dictyostelium discoideum (Social amoeba).